Reading from the N-terminus, the 352-residue chain is Molybdenum import ATP-binding protein ModC (352 aa).

An ABC transporter domain is found at 1–229; sequence MLELNFSQTL…SVMNPWLPKE (229 aa). 31 to 38 is a binding site for ATP; sequence GVSGAGKT. The 64-residue stretch at 289–352 folds into the Mop domain; the sequence is QTSIRNVLRA…AQIKSVSITA (64 aa).

Belongs to the ABC transporter superfamily. Molybdate importer (TC 3.A.1.8) family. The complex is composed of two ATP-binding proteins (ModC), two transmembrane proteins (ModB) and a solute-binding protein (ModA).

It localises to the cell inner membrane. The catalysed reaction is molybdate(out) + ATP + H2O = molybdate(in) + ADP + phosphate + H(+). In terms of biological role, part of the ABC transporter complex ModABC involved in molybdenum import. Responsible for energy coupling to the transport system. The protein is Molybdenum import ATP-binding protein ModC of Shigella dysenteriae serotype 1 (strain Sd197).